Here is a 279-residue protein sequence, read N- to C-terminus: Putative pyruvate, phosphate dikinase regulatory protein (279 aa).

153–160 (GVSRTSKT) is a binding site for ADP.

Belongs to the pyruvate, phosphate/water dikinase regulatory protein family. PDRP subfamily.

The catalysed reaction is N(tele)-phospho-L-histidyl/L-threonyl-[pyruvate, phosphate dikinase] + ADP = N(tele)-phospho-L-histidyl/O-phospho-L-threonyl-[pyruvate, phosphate dikinase] + AMP + H(+). It catalyses the reaction N(tele)-phospho-L-histidyl/O-phospho-L-threonyl-[pyruvate, phosphate dikinase] + phosphate + H(+) = N(tele)-phospho-L-histidyl/L-threonyl-[pyruvate, phosphate dikinase] + diphosphate. In terms of biological role, bifunctional serine/threonine kinase and phosphorylase involved in the regulation of the pyruvate, phosphate dikinase (PPDK) by catalyzing its phosphorylation/dephosphorylation. This is Putative pyruvate, phosphate dikinase regulatory protein from Bradyrhizobium sp. (strain ORS 278).